Reading from the N-terminus, the 98-residue chain is Co-chaperonin GroES (98 aa).

The protein belongs to the GroES chaperonin family. Heptamer of 7 subunits arranged in a ring. Interacts with the chaperonin GroEL.

The protein resides in the cytoplasm. In terms of biological role, together with the chaperonin GroEL, plays an essential role in assisting protein folding. The GroEL-GroES system forms a nano-cage that allows encapsulation of the non-native substrate proteins and provides a physical environment optimized to promote and accelerate protein folding. GroES binds to the apical surface of the GroEL ring, thereby capping the opening of the GroEL channel. The protein is Co-chaperonin GroES of Brucella abortus (strain S19).